A 36-amino-acid chain; its full sequence is Kappa-theraphotoxin-Pg1a (36 aa).

Disulfide bonds link C4-C19, C11-C24, and C18-C31.

The protein belongs to the neurotoxin 10 (Hwtx-1) family. 44 (Jztx-4) subfamily. In terms of tissue distribution, expressed by the venom gland.

It localises to the secreted. Functionally, gating modifier of Kv2.1/KCNB1 (IC(50)=5.1 nM), Kv2.2/KCNB2 and Kv4.3/KCND3 channels (IC(50)=39 nM). Acts by shifting the channel activation to more depolarized potentials by stabilizing the resting conformation of the voltage sensor. It completely inhibits opening of the Kv2.1/KCNB1 channel at negative membrane voltages and dramatically shifts channel activation to positive voltages. May act by partitioning into lipid membranes and then by binding the voltage sensor paddle of the channel from a place within the membrane. In Chilobrachys guangxiensis (Chinese earth tiger tarantula), this protein is Kappa-theraphotoxin-Pg1a.